The sequence spans 400 residues: Phosphoglycerate kinase (400 aa).

Substrate-binding positions include 19–21, Arg-38, 61–64, Arg-124, and Arg-161; these read DLN and HLGR. Residues Lys-211, Gly-299, Glu-330, and 356-359 contribute to the ATP site; that span reads GGDS.

Belongs to the phosphoglycerate kinase family. In terms of assembly, monomer.

The protein resides in the cytoplasm. It carries out the reaction (2R)-3-phosphoglycerate + ATP = (2R)-3-phospho-glyceroyl phosphate + ADP. The protein operates within carbohydrate degradation; glycolysis; pyruvate from D-glyceraldehyde 3-phosphate: step 2/5. This chain is Phosphoglycerate kinase, found in Frankia alni (strain DSM 45986 / CECT 9034 / ACN14a).